The primary structure comprises 429 residues: Ribosomal RNA small subunit methyltransferase B (429 aa).

S-adenosyl-L-methionine is bound by residues 254-260, aspartate 277, aspartate 303, and aspartate 322; that span reads CAAPGGK. The Nucleophile role is filled by cysteine 375.

The protein belongs to the class I-like SAM-binding methyltransferase superfamily. RsmB/NOP family.

The protein resides in the cytoplasm. It carries out the reaction cytidine(967) in 16S rRNA + S-adenosyl-L-methionine = 5-methylcytidine(967) in 16S rRNA + S-adenosyl-L-homocysteine + H(+). Specifically methylates the cytosine at position 967 (m5C967) of 16S rRNA. This chain is Ribosomal RNA small subunit methyltransferase B, found in Escherichia coli (strain SMS-3-5 / SECEC).